The chain runs to 227 residues: MEANTLFLLKALCLLCFNVCFTLASDPDPIQDFCIPKPVTSPYHDHHFSTNLPCKNSSEVTTEDFVFSGLKTAGNFTETGFATVPVGPENFPGLNTLGISFVRADLKPGSINPPHYHPRATEVAHLVKGRVYSGFVDSNNKVYAKVMEEGEMMVYPKGLVHFQMNVGDVTATIVGGLNSQNPGIQKIPSVVFGSGINEELLMKAFGLSLKQIGTLKKRFDPVMSNEH.

The signal sequence occupies residues 1–24 (MEANTLFLLKALCLLCFNVCFTLA). A disulfide bond links Cys34 and Cys54. Asn56 and Asn75 each carry an N-linked (GlcNAc...) asparagine glycan. A Cupin type-1 domain is found at 68-213 (SGLKTAGNFT…AFGLSLKQIG (146 aa)). Mn(2+) contacts are provided by His115, His117, Glu122, and His161.

It belongs to the germin family. In terms of assembly, oligomer (believed to be a pentamer but probably hexamer).

The protein resides in the secreted. Its subcellular location is the extracellular space. It is found in the apoplast. Its function is as follows. May play a role in plant defense. Probably has no oxalate oxidase activity even if the active site is conserved. The polypeptide is Germin-like protein subfamily 3 member 2 (Arabidopsis thaliana (Mouse-ear cress)).